A 255-amino-acid polypeptide reads, in one-letter code: Proteasome subunit alpha type-3 (255 aa).

An N-acetylserine modification is found at Ser-2. 3 positions are modified to N6-acetyllysine: Lys-57, Lys-206, and Lys-230. Phosphoserine is present on residues Ser-243 and Ser-250.

Belongs to the peptidase T1A family. The 26S proteasome consists of a 20S proteasome core and two 19S regulatory subunits. The 20S proteasome core is a barrel-shaped complex made of 28 subunits that are arranged in four stacked rings. The two outer rings are each formed by seven alpha subunits, and the two inner rings are formed by seven beta subunits. The proteolytic activity is exerted by three beta-subunits PSMB5, PSMB6 and PSMB7. Interacts with AURKB. Interacts with CDKN1A. Interacts with MDM2 and RB1. Interacts with the C-terminus of TBXA2R isoform 2. Interacts with DNAJB2. Detected in liver (at protein level).

It is found in the cytoplasm. The protein resides in the nucleus. Component of the 20S core proteasome complex involved in the proteolytic degradation of most intracellular proteins. This complex plays numerous essential roles within the cell by associating with different regulatory particles. Associated with two 19S regulatory particles, forms the 26S proteasome and thus participates in the ATP-dependent degradation of ubiquitinated proteins. The 26S proteasome plays a key role in the maintenance of protein homeostasis by removing misfolded or damaged proteins that could impair cellular functions, and by removing proteins whose functions are no longer required. Associated with the PA200 or PA28, the 20S proteasome mediates ubiquitin-independent protein degradation. This type of proteolysis is required in several pathways including spermatogenesis (20S-PA200 complex) or generation of a subset of MHC class I-presented antigenic peptides (20S-PA28 complex). Binds to the C-terminus of CDKN1A and thereby mediates its degradation. Negatively regulates the membrane trafficking of the cell-surface thromboxane A2 receptor (TBXA2R) isoform 2. The sequence is that of Proteasome subunit alpha type-3 (Psma3) from Mus musculus (Mouse).